The primary structure comprises 355 residues: Methylthioribose-1-phosphate isomerase (355 aa).

Substrate is bound by residues 50–52 (RGA), Arg93, and Gln198. Asp239 (proton donor) is an active-site residue. Residue 249–250 (NK) coordinates substrate.

The protein belongs to the eIF-2B alpha/beta/delta subunits family. MtnA subfamily. In terms of assembly, homodimer.

The enzyme catalyses 5-(methylsulfanyl)-alpha-D-ribose 1-phosphate = 5-(methylsulfanyl)-D-ribulose 1-phosphate. The protein operates within amino-acid biosynthesis; L-methionine biosynthesis via salvage pathway; L-methionine from S-methyl-5-thio-alpha-D-ribose 1-phosphate: step 1/6. Functionally, catalyzes the interconversion of methylthioribose-1-phosphate (MTR-1-P) into methylthioribulose-1-phosphate (MTRu-1-P). The sequence is that of Methylthioribose-1-phosphate isomerase from Geobacillus kaustophilus (strain HTA426).